A 390-amino-acid chain; its full sequence is Terminal nucleotidyltransferase 5C (390 aa).

Belongs to the TENT family.

The protein resides in the nucleus. It is found in the cytoplasm. Its subcellular location is the cytoskeleton. It localises to the microtubule organizing center. The protein localises to the centrosome. The catalysed reaction is RNA(n) + ATP = RNA(n)-3'-adenine ribonucleotide + diphosphate. Functionally, catalyzes the transfer of one adenosine molecule from an ATP to an mRNA poly(A) tail bearing a 3'-OH terminal group and enhances mRNA stability and gene expression. This Gallus gallus (Chicken) protein is Terminal nucleotidyltransferase 5C.